Reading from the N-terminus, the 252-residue chain is Thiazole synthase (252 aa).

Lys-95 serves as the catalytic Schiff-base intermediate with DXP. Residues Gly-156, 182 to 183 (AG), and 204 to 205 (NT) each bind 1-deoxy-D-xylulose 5-phosphate.

This sequence belongs to the ThiG family. As to quaternary structure, homotetramer. Forms heterodimers with either ThiH or ThiS.

The protein localises to the cytoplasm. It catalyses the reaction [ThiS sulfur-carrier protein]-C-terminal-Gly-aminoethanethioate + 2-iminoacetate + 1-deoxy-D-xylulose 5-phosphate = [ThiS sulfur-carrier protein]-C-terminal Gly-Gly + 2-[(2R,5Z)-2-carboxy-4-methylthiazol-5(2H)-ylidene]ethyl phosphate + 2 H2O + H(+). The protein operates within cofactor biosynthesis; thiamine diphosphate biosynthesis. In terms of biological role, catalyzes the rearrangement of 1-deoxy-D-xylulose 5-phosphate (DXP) to produce the thiazole phosphate moiety of thiamine. Sulfur is provided by the thiocarboxylate moiety of the carrier protein ThiS. In vitro, sulfur can be provided by H(2)S. The sequence is that of Thiazole synthase from Shewanella sp. (strain ANA-3).